The primary structure comprises 310 residues: Putative sugar kinase PH1459 (310 aa).

Residues lysine 194, threonine 219, and glycine 224 each coordinate ATP.

It belongs to the carbohydrate kinase PfkB family.

This Pyrococcus horikoshii (strain ATCC 700860 / DSM 12428 / JCM 9974 / NBRC 100139 / OT-3) protein is Putative sugar kinase PH1459.